The chain runs to 387 residues: Protein TsgA homolog (387 aa).

12 helical membrane-spanning segments follow: residues 11-31 (WISFFSYAFTGALIVITGMIM), 47-67 (NIFTFLNAGILISIFLNSWLI), 76-96 (LIFGFLFSIIAILGIVFSTSI), 101-121 (INIFILGLVSGITMSIGTFII), 134-154 (LLLTDSFFSMSGMIFPIISAY), 160-180 (ILWYWIYVFLGIIYFLIFILT), 205-225 (IILLSISALLYILGQLSFISW), 243-263 (VLVSNFWMAYMIGMWCFSFII), 271-291 (MFIFLTGSSSVLMYCFIYSKS), 299-319 (IISLGFFSSAIYTIIITLASL), 331-351 (LILFFGTIGTLLTFIITSPIV), and 358-378 (TTLIFSNVLYVIVFFLSCIIF).

The protein belongs to the major facilitator superfamily. TsgA family.

Its subcellular location is the cell membrane. The polypeptide is Protein TsgA homolog (Buchnera aphidicola subsp. Schizaphis graminum (strain Sg)).